The primary structure comprises 98 residues: Large ribosomal subunit protein eL21 (98 aa).

The segment at Met-1 to Glu-22 is disordered. A compositionally biased stretch (basic residues) spans Arg-10–Arg-21.

The protein belongs to the eukaryotic ribosomal protein eL21 family.

This Methanocaldococcus jannaschii (strain ATCC 43067 / DSM 2661 / JAL-1 / JCM 10045 / NBRC 100440) (Methanococcus jannaschii) protein is Large ribosomal subunit protein eL21 (rpl21e).